We begin with the raw amino-acid sequence, 128 residues long: Translation initiation factor 5A (128 aa).

The residue at position 35 (Lys-35) is a Hypusine.

Belongs to the eIF-5A family.

The protein localises to the cytoplasm. Functionally, functions by promoting the formation of the first peptide bond. This Methanosarcina barkeri (strain Fusaro / DSM 804) protein is Translation initiation factor 5A.